The chain runs to 547 residues: Dihydrolipoyllysine-residue acetyltransferase component of pyruvate dehydrogenase complex (547 aa).

The Lipoyl-binding 1 domain maps to 2-75; it reads SELIRVPDIG…KEGDEILELE (74 aa). Lys-41 carries the N6-lipoyllysine modification. A disordered region spans residues 75–117; the sequence is EVEGGEQPAEAKAEAAPAQPEAPKAEAPAPAPSESKPAAPAAA. Residues 80 to 117 show a composition bias toward low complexity; that stretch reads EQPAEAKAEAAPAQPEAPKAEAPAPAPSESKPAAPAAA. Residues 119-193 form the Lipoyl-binding 2 domain; that stretch reads VQDIKVPDIG…GTGDLILKLK (75 aa). At Lys-159 the chain carries N6-lipoyllysine. Positions 202–231 are enriched in low complexity; that stretch reads EEQPAAAPAQAAAPAAEQKPAAAAPAPAKA. Residues 202 to 248 are disordered; that stretch reads EEQPAAAPAQAAAPAAEQKPAAAAPAPAKADTPAPVGAPSRDGAKVH. A Peripheral subunit-binding (PSBD) domain is found at 248–285; sequence HAGPAVRMLAREFGVELSEVKASGPKGRILKEDVQVFV. His-520 is an active-site residue.

It belongs to the 2-oxoacid dehydrogenase family. As to quaternary structure, forms a 24-polypeptide structural core with octahedral symmetry. Requires (R)-lipoate as cofactor.

It catalyses the reaction N(6)-[(R)-dihydrolipoyl]-L-lysyl-[protein] + acetyl-CoA = N(6)-[(R)-S(8)-acetyldihydrolipoyl]-L-lysyl-[protein] + CoA. The pyruvate dehydrogenase complex catalyzes the overall conversion of pyruvate to acetyl-CoA and CO(2). It contains multiple copies of three enzymatic components: pyruvate dehydrogenase (E1), dihydrolipoamide acetyltransferase (E2) and lipoamide dehydrogenase (E3). In Pseudomonas aeruginosa (strain ATCC 15692 / DSM 22644 / CIP 104116 / JCM 14847 / LMG 12228 / 1C / PRS 101 / PAO1), this protein is Dihydrolipoyllysine-residue acetyltransferase component of pyruvate dehydrogenase complex (aceF).